Here is a 205-residue protein sequence, read N- to C-terminus: Pyrrolidone-carboxylate peptidase (205 aa).

Active-site residues include glutamate 78, cysteine 141, and histidine 165.

Belongs to the peptidase C15 family. Homotetramer.

The protein resides in the cytoplasm. The enzyme catalyses Release of an N-terminal pyroglutamyl group from a polypeptide, the second amino acid generally not being Pro.. In terms of biological role, removes 5-oxoproline from various penultimate amino acid residues except L-proline. In Thermosipho africanus (strain TCF52B), this protein is Pyrrolidone-carboxylate peptidase.